The sequence spans 80 residues: Bacteriochlorophyll c-binding protein (80 aa).

An a bacteriochlorophyll c-binding site is contributed by His-25. The segment at 49-80 is disordered; sequence PGVSRSGSGEGAFSSSPSNGFRPKRIRSRFNR. A propeptide spanning residues 54–80 is cleaved from the precursor; sequence SGSGEGAFSSSPSNGFRPKRIRSRFNR. Residues 70–80 show a composition bias toward basic residues; it reads RPKRIRSRFNR.

Belongs to the BChl C/E-binding protein family.

The protein resides in the chlorosome. It localises to the chlorosome envelope. In terms of biological role, component of the photosynthetic apparatus. The light harvesting B740 complex binds bacteriochlorophyll c. This is Bacteriochlorophyll c-binding protein (cmsA) from Chloroflexus aurantiacus (strain ATCC 29366 / DSM 635 / J-10-fl).